The following is a 383-amino-acid chain: Polyketide synthase 4 (383 aa).

The Nucleophile and monoketide coumarate intermediate role is filled by C164.

Belongs to the thiolase-like superfamily. Chalcone/stilbene synthases family. Homodimer. In terms of tissue distribution, expressed in fruits.

It catalyses the reaction 4-coumaroyl-CoA + malonyl-CoA + H2O + H(+) = 4-hydroxybenzalacetone + 2 CO2 + 2 CoA. The catalysed reaction is (E)-4-coumaroyl-CoA + 3 malonyl-CoA + 3 H(+) = 2',4,4',6'-tetrahydroxychalcone + 3 CO2 + 4 CoA. It participates in secondary metabolite biosynthesis; flavonoid biosynthesis. With respect to regulation, inhibited by glutathione. Functionally, bifunctional polyketide synthase producing both 4-hydroxybenzalacetone and naringenin chalcone. Can use p-coumaryl-CoA and ferulyl-CoA as substrates. Catalyzes the initial key reaction step in the biosynthesis of phenylbutanoids. This Rubus idaeus (Raspberry) protein is Polyketide synthase 4 (PKS4).